Here is a 541-residue protein sequence, read N- to C-terminus: Chaperonin GroEL (541 aa).

Residues 29–32, 86–90, Gly-413, 477–479, and Asp-493 contribute to the ATP site; these read TLGP, DGTTT, and DAL.

Belongs to the chaperonin (HSP60) family. As to quaternary structure, forms a cylinder of 14 subunits composed of two heptameric rings stacked back-to-back. Interacts with the co-chaperonin GroES.

Its subcellular location is the cytoplasm. The catalysed reaction is ATP + H2O + a folded polypeptide = ADP + phosphate + an unfolded polypeptide.. Functionally, together with its co-chaperonin GroES, plays an essential role in assisting protein folding. The GroEL-GroES system forms a nano-cage that allows encapsulation of the non-native substrate proteins and provides a physical environment optimized to promote and accelerate protein folding. This Clostridium botulinum (strain 657 / Type Ba4) protein is Chaperonin GroEL.